Here is a 237-residue protein sequence, read N- to C-terminus: Sugar fermentation stimulation protein homolog (237 aa).

The protein belongs to the SfsA family.

This chain is Sugar fermentation stimulation protein homolog, found in Azorhizobium caulinodans (strain ATCC 43989 / DSM 5975 / JCM 20966 / LMG 6465 / NBRC 14845 / NCIMB 13405 / ORS 571).